Here is a 138-residue protein sequence, read N- to C-terminus: Large ribosomal subunit protein uL16c (138 aa).

The protein belongs to the universal ribosomal protein uL16 family. Part of the 50S ribosomal subunit.

Its subcellular location is the plastid. It is found in the chloroplast. The sequence is that of Large ribosomal subunit protein uL16c from Tetradesmus obliquus (Green alga).